The sequence spans 439 residues: Serine/threonine-protein kinase 2 (439 aa).

The region spanning 87–439 (NDDFYHISTG…IFSDWINGGN (353 aa)) is the Protein kinase domain. ATP-binding positions include 93 to 101 (ISTGGYGIV) and lysine 117. Aspartate 307 functions as the Proton acceptor in the catalytic mechanism.

It belongs to the protein kinase superfamily. Ser/Thr protein kinase family. Poxviruses subfamily. Post-translationally, phosphorylated in vivo. Autophosphorylated in vitro.

It is found in the host endoplasmic reticulum. The protein resides in the host endoplasmic reticulum-Golgi intermediate compartment. It carries out the reaction L-seryl-[protein] + ATP = O-phospho-L-seryl-[protein] + ADP + H(+). It catalyses the reaction L-threonyl-[protein] + ATP = O-phospho-L-threonyl-[protein] + ADP + H(+). Its function is as follows. Essential serine-protein kinase involved in the early stage of virion morphogenesis. The chain is Serine/threonine-protein kinase 2 (OPG054) from Vaccinia virus (strain Ankara) (VACV).